The chain runs to 333 residues: Gap junction alpha-4 protein (333 aa).

Over 1–20 (MGDWGFLEKLLDQVQEHSTV) the chain is Cytoplasmic. A helical membrane pass occupies residues 21–40 (VGKIWLTVLFIFRILILGLA). Residues 41 to 76 (GESVWGDEQSDFECNTAQPGCTNVCYDQAFPISHIR) lie on the Extracellular side of the membrane. Residues 77 to 99 (YWVLQFLFVSTPTLVYLGHVIYL) traverse the membrane as a helical segment. The Cytoplasmic segment spans residues 100–148 (SRREERLRQKEGELRALPAKDPRVERALASIERQMAKISVAEDGHLRIR). The helical transmembrane segment at 149–165 (GALMGTYVASVLCKSVL) threads the bilayer. Residues 166-207 (EAGFLYGQWRLYGWTMEPVFVCQRSPCPYLVDCFVSRPTEKT) lie on the Extracellular side of the membrane. A helical transmembrane segment spans residues 208–230 (IFIIFMLVVGLISLVLNLLELAY). The Cytoplasmic segment spans residues 231–333 (LLCRCLSRGV…SSSASKKQYV (103 aa)). Positions 303-333 (SRAPLFLDPPPQTGRKSPSRPSSSASKKQYV) are disordered. The span at 317 to 333 (RKSPSRPSSSASKKQYV) shows a compositional bias: low complexity.

It belongs to the connexin family. Alpha-type (group II) subfamily. A connexon is composed of a hexamer of connexins.

The protein resides in the cell membrane. It localises to the cell junction. The protein localises to the gap junction. Functionally, one gap junction consists of a cluster of closely packed pairs of transmembrane channels, the connexons, through which materials of low MW diffuse from one cell to a neighboring cell. The chain is Gap junction alpha-4 protein (GJA4) from Bos taurus (Bovine).